We begin with the raw amino-acid sequence, 307 residues long: UDP-3-O-acyl-N-acetylglucosamine deacetylase (307 aa).

Zn(2+)-binding residues include His78, His241, and Asp245. The Proton donor role is filled by His268.

Belongs to the LpxC family. Zn(2+) is required as a cofactor.

The enzyme catalyses a UDP-3-O-[(3R)-3-hydroxyacyl]-N-acetyl-alpha-D-glucosamine + H2O = a UDP-3-O-[(3R)-3-hydroxyacyl]-alpha-D-glucosamine + acetate. The protein operates within glycolipid biosynthesis; lipid IV(A) biosynthesis; lipid IV(A) from (3R)-3-hydroxytetradecanoyl-[acyl-carrier-protein] and UDP-N-acetyl-alpha-D-glucosamine: step 2/6. Catalyzes the hydrolysis of UDP-3-O-myristoyl-N-acetylglucosamine to form UDP-3-O-myristoylglucosamine and acetate, the committed step in lipid A biosynthesis. This Polaromonas sp. (strain JS666 / ATCC BAA-500) protein is UDP-3-O-acyl-N-acetylglucosamine deacetylase.